The chain runs to 286 residues: Urease accessory protein UreD 2 (286 aa).

The protein belongs to the UreD family. In terms of assembly, ureD, UreF and UreG form a complex that acts as a GTP-hydrolysis-dependent molecular chaperone, activating the urease apoprotein by helping to assemble the nickel containing metallocenter of UreC. The UreE protein probably delivers the nickel.

It localises to the cytoplasm. Functionally, required for maturation of urease via the functional incorporation of the urease nickel metallocenter. The polypeptide is Urease accessory protein UreD 2 (Bradyrhizobium sp. (strain ORS 278)).